Consider the following 478-residue polypeptide: tRNA modification GTPase MnmE (478 aa).

(6S)-5-formyl-5,6,7,8-tetrahydrofolate-binding residues include Arg-25, Glu-82, and Lys-135. In terms of domain architecture, TrmE-type G spans Gly-231–Gly-400. A K(+)-binding site is contributed by Asn-241. GTP contacts are provided by residues Asn-241–Ser-246, Thr-260–Thr-266, and Asp-285–Gly-288. Ser-245 contacts Mg(2+). Thr-260, Ile-262, and Thr-265 together coordinate K(+). Thr-266 lines the Mg(2+) pocket. Lys-478 contributes to the (6S)-5-formyl-5,6,7,8-tetrahydrofolate binding site.

It belongs to the TRAFAC class TrmE-Era-EngA-EngB-Septin-like GTPase superfamily. TrmE GTPase family. Homodimer. Heterotetramer of two MnmE and two MnmG subunits. Requires K(+) as cofactor.

It localises to the cytoplasm. Functionally, exhibits a very high intrinsic GTPase hydrolysis rate. Involved in the addition of a carboxymethylaminomethyl (cmnm) group at the wobble position (U34) of certain tRNAs, forming tRNA-cmnm(5)s(2)U34. The chain is tRNA modification GTPase MnmE from Polaromonas sp. (strain JS666 / ATCC BAA-500).